The chain runs to 218 residues: Small ribosomal subunit protein uS3c (218 aa).

In terms of domain architecture, KH type-2 spans 39–120 (IRNFMNKELL…IITCKVVGVT (82 aa)).

This sequence belongs to the universal ribosomal protein uS3 family. As to quaternary structure, part of the 30S ribosomal subunit.

The protein localises to the plastid. It is found in the chloroplast. The polypeptide is Small ribosomal subunit protein uS3c (rps3) (Euglena gracilis).